The primary structure comprises 277 residues: uncharacterized protein (277 aa).

This is an uncharacterized protein from Acanthamoeba polyphaga mimivirus (APMV).